A 376-amino-acid chain; its full sequence is Erythronate-4-phosphate dehydrogenase (376 aa).

Positions 45 and 67 each coordinate substrate. Asp147 serves as a coordination point for NAD(+). Arg209 is a catalytic residue. NAD(+) is bound at residue Asp233. Glu238 is a catalytic residue. Catalysis depends on His255, which acts as the Proton donor. Gly258 is an NAD(+) binding site. Tyr259 lines the substrate pocket.

The protein belongs to the D-isomer specific 2-hydroxyacid dehydrogenase family. PdxB subfamily. Homodimer.

It is found in the cytoplasm. It carries out the reaction 4-phospho-D-erythronate + NAD(+) = (R)-3-hydroxy-2-oxo-4-phosphooxybutanoate + NADH + H(+). Its pathway is cofactor biosynthesis; pyridoxine 5'-phosphate biosynthesis; pyridoxine 5'-phosphate from D-erythrose 4-phosphate: step 2/5. Catalyzes the oxidation of erythronate-4-phosphate to 3-hydroxy-2-oxo-4-phosphonooxybutanoate. The chain is Erythronate-4-phosphate dehydrogenase from Shewanella halifaxensis (strain HAW-EB4).